Here is a 635-residue protein sequence, read N- to C-terminus: Biosynthetic arginine decarboxylase (635 aa).

K100 bears the N6-(pyridoxal phosphate)lysine mark. 282 to 292 (LDIGGGLGVDY) is a substrate binding site.

The protein belongs to the Orn/Lys/Arg decarboxylase class-II family. SpeA subfamily. Mg(2+) serves as cofactor. The cofactor is pyridoxal 5'-phosphate.

The enzyme catalyses L-arginine + H(+) = agmatine + CO2. It participates in amine and polyamine biosynthesis; agmatine biosynthesis; agmatine from L-arginine: step 1/1. Functionally, catalyzes the biosynthesis of agmatine from arginine. The polypeptide is Biosynthetic arginine decarboxylase (speA) (Citrifermentans bemidjiense (strain ATCC BAA-1014 / DSM 16622 / JCM 12645 / Bem) (Geobacter bemidjiensis)).